The chain runs to 212 residues: Vesicle transport protein SFT2C (212 aa).

The Cytoplasmic portion of the chain corresponds to 1–78 (MADLHRQLQD…TRGQRLVAGG (78 aa)). Residues 79 to 99 (LCLLLAALCFGLAALYAPVLL) form a helical membrane-spanning segment. Residues 100 to 104 (LRARK) lie on the Lumenal side of the membrane. A helical membrane pass occupies residues 105-125 (FALLWSLGSVLAWASAALLRG). Topologically, residues 126–142 (GPACGRLLRGEETPSRS) are cytoplasmic. The helical transmembrane segment at 143–165 (TLGYAAALGATLYAALVLRSTVL) threads the bilayer. Topologically, residues 166 to 174 (TALGACAQV) are lumenal. The chain crosses the membrane as a helical span at residues 175–197 (AALLYALIGLLPWGGVTALRLAL). Topologically, residues 198–212 (GRLNRGTGLANALPV) are cytoplasmic.

It belongs to the SFT2 family.

Its subcellular location is the membrane. In terms of biological role, may be involved in fusion of retrograde transport vesicles derived from an endocytic compartment with the Golgi complex. The chain is Vesicle transport protein SFT2C from Mus musculus (Mouse).